A 1748-amino-acid chain; its full sequence is Tight junction protein 1 (1748 aa).

The 88-residue stretch at 23–110 (TVTLHRAPGF…NAKITIRRKK (88 aa)) folds into the PDZ 1 domain. Residues 102–112 (AKITIRRKKKV) are compositionally biased toward basic residues. Residues 102–189 (AKITIRRKKK…QPAKPTKVTL (88 aa)) form a disordered region. Acidic residues predominate over residues 123-136 (PVSDNEEDSYDEEI). Residue serine 125 is modified to Phosphoserine. Tyrosine 132 carries the phosphotyrosine modification. Over residues 149-175 (RRSEKIWPRDRSASRERSLSPRSDRRS) the composition is skewed to basic and acidic residues. A phosphoserine mark is found at serine 175, serine 178, and serine 179. Position 185 is a phosphothreonine (threonine 185). A PDZ 2 domain is found at 186–264 (KVTLVKSRKN…KLKMVVQRDE (79 aa)). 2 positions are modified to phosphoserine: serine 212 and serine 241. Position 267 is a phosphothreonine (threonine 267). Phosphoserine is present on residues serine 275, serine 277, serine 280, serine 284, serine 290, serine 294, serine 297, serine 300, serine 323, serine 329, serine 334, serine 337, and serine 353. The segment at 295–396 (LASDHSGRSH…PVYAQVGQPD (102 aa)) is disordered. Positions 299–327 (HSGRSHDRPPRRSRSRSPDQRSEPSDHSR) are enriched in basic and acidic residues. Positions 329-338 (SPQQPSNGSL) are enriched in polar residues. Residue threonine 354 is modified to Phosphothreonine. The span at 357-377 (KHADDHTPKTVEEVTVERNEK) shows a compositional bias: basic and acidic residues. In terms of domain architecture, PDZ 3 spans 421-502 (SMKLVKFRKG…GEEVTILAQK (82 aa)). The region spanning 516–584 (GDSFYIRTHF…PNKNRAEQLA (69 aa)) is the SH3 domain. The region spanning 598–779 (RADFWRFRGL…TTTINLNSMN (182 aa)) is the Guanylate kinase-like domain. A phosphoserine mark is found at serine 617 and serine 622. The occludin (OCLN)-binding region stretch occupies residues 633 to 876 (YERVVLREAG…GTPPESAITR (244 aa)). Threonine 809 carries the post-translational modification Phosphothreonine. Phosphoserine occurs at positions 810 and 821. A Phosphotyrosine modification is found at tyrosine 822. A phosphoserine mark is found at serine 824, serine 828, and serine 837. Disordered regions lie at residues 825–1081 (APGS…LRYE) and 1095–1587 (DDKQ…PEFD). A phosphothreonine mark is found at threonine 846, threonine 848, threonine 854, threonine 861, and threonine 868. Residues 879 to 892 (EPVREDSSGMHHEN) show a composition bias toward basic and acidic residues. A compositionally biased stretch (low complexity) spans 893–906 (QTYPPYSPQAQPQP). Residue serine 912 is modified to Phosphoserine. Polar residues-rich tracts occupy residues 934-953 (PETN…NLTN) and 963-979 (PSTS…TPST). Serine 968 bears the Phosphoserine mark. Over residues 998–1014 (DPTKVYRKDPYPEEMMR) the composition is skewed to basic and acidic residues. The span at 1061–1072 (YESSSYTDQFSR) shows a compositional bias: polar residues. Phosphoserine is present on residues serine 1071, serine 1111, and serine 1139. A compositionally biased stretch (basic and acidic residues) spans 1110–1125 (HSQDLDSRQHPEESSE). Tyrosine 1140 and tyrosine 1165 each carry phosphotyrosine. Positions 1151–1371 (RASALRHEEQ…FDRRSFENKP (221 aa)) are actin-binding region (ABR). Composition is skewed to basic and acidic residues over residues 1269–1286 (KMFE…KDVN) and 1336–1347 (PPEDIVRSNHYD). Phosphotyrosine is present on tyrosine 1354. Position 1366 is a phosphoserine (serine 1366). The span at 1389-1400 (SQNQSNFSSYSS) shows a compositional bias: low complexity. Over residues 1403–1420 (KPPEADGVDRSFGEKRYE) the composition is skewed to basic and acidic residues. Serine 1413 bears the Phosphoserine mark. 2 stretches are compositionally biased toward polar residues: residues 1459 to 1470 (NSVSLDFQNSLV) and 1512 to 1522 (GTEQTQKTVTP). Basic and acidic residues predominate over residues 1538-1547 (PFERKFESPK). Phosphoserine occurs at positions 1545 and 1617. Residues 1634–1748 (ATARGIFNSN…NCVSVLIDHF (115 aa)) form the ZU5 domain.

Belongs to the MAGUK family. Homodimer. Forms heterodimers TJP3. Forms a heterodimer (via PDZ2 domain) with TJP2/ZO2 (via PDZ2 domain). Interacts with OCLN, CALM, claudins, CGN/cingulin, CXADR, GJA12, GJD3 and UBN1. Interacts (via ZU5 domain) with CDC42BPB and MYZAP. Interacts (via PDZ domain) with GJA1. Interacts (via PDZ domains) with ANKRD2. Interacts with POPDC1 (via the C-terminus cytoplasmic tail). Interacts with HSPA4 and KIRREL1. Interacts with DLL1. Interacts with USP53 (via the C-terminal region). Interacts (via ABR region) with F-actin. Interacts with DNMBP (via C-terminal domain); required for the apical cell-cell junction localization of DNMBP. Interacts with SPEF1. Interacts (via N-terminus) with CTNNA1. Interacts with CLDN18. Interacts with CLDN16 (via TRV motif); this is a prerequisite for anchoring of CLDN16 at the tight junction. Interacts with PKP1; the interaction facilitates TJP1/ZO-1 localization to the plasma membrane. Interacts with PATJ (via PDZ1-6 domains); the interaction is required for attachment and extension of TJP1/ZO1 condensates along the apical cell interface. Phosphorylated at tyrosine redidues in response to epidermal growth factor (EGF). This response is dependent on an intact actin microfilament system. Dephosphorylated by PTPRJ. In terms of tissue distribution, the alpha-containing isoform is found in most epithelial cell junctions. The short isoform is found both in endothelial cells and the highly specialized epithelial junctions of renal glomeruli and Sertoli cells of the seminiferous tubules.

Its subcellular location is the cell membrane. The protein localises to the cell junction. It is found in the tight junction. It localises to the gap junction. The protein resides in the cell projection. Its subcellular location is the podosome. Functionally, TJP1, TJP2, and TJP3 are closely related scaffolding proteins that link tight junction (TJ) transmembrane proteins such as claudins, junctional adhesion molecules, and occludin to the actin cytoskeleton. Forms a multistranded TJP1/ZO1 condensate which elongates to form a tight junction belt, the belt is anchored at the apical cell membrane via interaction with PATJ. The tight junction acts to limit movement of substances through the paracellular space and as a boundary between the compositionally distinct apical and basolateral plasma membrane domains of epithelial and endothelial cells. Necessary for lumenogenesis, and particularly efficient epithelial polarization and barrier formation. Plays a role in the regulation of cell migration by targeting CDC42BPB to the leading edge of migrating cells. Plays an important role in podosome formation and associated function, thus regulating cell adhesion and matrix remodeling. With TJP2 and TJP3, participates in the junctional retention and stability of the transcription factor DBPA, but is not involved in its shuttling to the nucleus. May play a role in mediating cell morphology changes during ameloblast differentiation via its role in tight junctions. In Homo sapiens (Human), this protein is Tight junction protein 1.